We begin with the raw amino-acid sequence, 834 residues long: Sodium/hydrogen exchanger 3 (834 aa).

An N-terminal signal peptide occupies residues 1–25; it reads MWGLGARGPDRGLLLALALGGLARA. Residues 26–51 are Extracellular-facing; that stretch reads GGVEVEPGGAHGESGGFQVVTFEWAH. Residues 52-74 form a helical membrane-spanning segment; it reads VQDPYVIALWILVASLAKIGFHL. Topologically, residues 75-82 are cytoplasmic; sequence SHKVTSVV. Residues 83-102 traverse the membrane as a helical segment; it reads PESALLIVLGLVLGGIVWAA. Residues 103–111 are Extracellular-facing; it reads DHIASFTLT. The chain crosses the membrane as a helical span at residues 112 to 129; that stretch reads PTVFFFYLLPPIVLDAGY. Over 130 to 132 the chain is Cytoplasmic; that stretch reads FMP. A helical membrane pass occupies residues 133–168; that stretch reads NRLFFGNLGTILLYAVVGTVWNAATTGLSLYGVFLS. 3 residues coordinate a 1,2-diacyl-sn-glycero-3-phospho-(1D-myo-inositol): Gly138, Gly141, and Thr142. The Extracellular segment spans residues 169–181; that stretch reads GLMGDLQIGLLDF. Residues 182-203 form a helical membrane-spanning segment; sequence LLFGSLMAAVDPVAVLAVFEEV. Residues 204-205 lie on the Cytoplasmic side of the membrane; the sequence is HV. The helical transmembrane segment at 206 to 237 threads the bilayer; sequence NEVLFIIVFGESLLNDAVTVVLYNVFESFVAL. The Extracellular portion of the chain corresponds to 238 to 244; the sequence is GGDNVTG. A glycan (N-linked (GlcNAc...) asparagine) is linked at Asn241. The helical transmembrane segment at 245-279 threads the bilayer; that stretch reads VDCVKGIVSFFVVSLGGTLVGVVFAFLLSLVTRFT. At 280–281 the chain is on the cytoplasmic side; sequence KH. The helical transmembrane segment at 282–304 threads the bilayer; the sequence is VRIIEPGFVFIISYLSYLTSEML. Over 305-306 the chain is Extracellular; the sequence is SL. A helical membrane pass occupies residues 307 to 323; sequence SAILAITFCGICCQKYV. The Cytoplasmic portion of the chain corresponds to 324–330; the sequence is KANISEQ. A helical transmembrane segment spans residues 331 to 359; the sequence is SATTVRYTMKMLASSAETIIFMFLGISAV. The Extracellular segment spans residues 360 to 367; the sequence is NPFIWTWN. Residues 368–389 form a helical membrane-spanning segment; it reads TAFVLLTLVFISVYRAIGVVLQ. Residues 390 to 402 are Cytoplasmic-facing; the sequence is TWLLNRYRMVQLE. Met398 lines the a 1,2-diacyl-sn-glycero-3-phospho-(1D-myo-inositol) pocket. The helical transmembrane segment at 403 to 426 threads the bilayer; sequence PIDQVVLSYGGLRGAVAFALVVLL. At 427–433 the chain is on the extracellular side; sequence DGDKVKE. A helical membrane pass occupies residues 434–467; it reads KNLFVSTTIIVVFFTVIFQGLTIKPLVQWLKVKR. Residues 468-834 are Cytoplasmic-facing; that stretch reads SEHREPRLNE…PAALPESTHM (367 aa). Positions 497, 498, and 500 each coordinate a 1,2-diacyl-sn-glycero-3-phospho-(1D-myo-inositol). Phosphoserine is present on residues Ser555 and Ser563. An interaction with EZR region spans residues 575 to 589; sequence RSSTVEASVSYLLRE. The segment at 590–667 is interaction with NHERF4; that stretch reads NVSAVCLDMQ…RKRLESFKST (78 aa). The interval 591 to 695 is interaction with AHCYL1; that stretch reads VSAVCLDMQS…AQKRRNSSIP (105 aa). Ser592 and Ser607 each carry phosphoserine. Phosphoserine; by SGK1 is present on Ser663. Basic residues predominate over residues 679 to 691; it reads KLYKRERAQKRRN. Residues 679-728 are disordered; that stretch reads KLYKRERAQKRRNSSIPNGKLPMESPAQNFTIKEKDLELSDTEEPPNYDE. Over residues 717 to 728 the composition is skewed to acidic residues; that stretch reads LSDTEEPPNYDE. Residues Ser718, Ser810, and Ser813 each carry the phosphoserine modification. The interval 814-834 is disordered; sequence FLQADGPEERPPAALPESTHM.

Belongs to the monovalent cation:proton antiporter 1 (CPA1) transporter (TC 2.A.36) family. In terms of assembly, homodimer. Found in the forms of complex and dynamic macromolecular complexes. Binds NHERF1 and NHERF2. Interacts with CHP1; increases SLC9A3 trafficking and activity at the plasma membrane. Interacts with CHP2 and SHANK2. Interacts with PDZK1 (via C-terminal PDZ domain). Interacts with NHERF4 and interaction decrease in response to elevated calcium ion levels. Interacts with AHCYL1; the interaction is required for SLC9A3 activity. Interacts with SNX27 (via PDZ domains); directs SLC9A3 membrane insertion from early endosomes to the plasma membrane. Interacts with EZR; interaction targets SLC9A3 to the apical membrane. Phosphorylated by PKA, which inhibits activity. Phosphorylation at Ser-663 by SGK1 is associated with increased abundance at the cell membrane. Phosphorylation at Ser-718 by CSNK2A1 regulates SLC9A3 activity through the formation of multiple signaling complexes.

The protein localises to the apical cell membrane. It localises to the cell membrane. Its subcellular location is the recycling endosome membrane. It is found in the early endosome membrane. It catalyses the reaction Na(+)(in) + H(+)(out) = Na(+)(out) + H(+)(in). With respect to regulation, seems to switch between active and inactive modes in response to various stimuli. Activated directly or indirectly by membrane phosphatidylinositol (PIs). Regulated by a variety of auxiliary proteins, which facilitate the maturation, cell surface expression and function of the transporter. Inhibited specifically by the drug tenapanor. Plasma membrane Na(+)/H(+) antiporter. Exchanges intracellular H(+) ions for extracellular Na(+) in 1:1 stoichiometry, playing a key role in salt and fluid absorption and pH homeostasis. Major apical Na(+)/H(+) exchanger in kidney and intestine playing an important role in renal and intestine Na(+) absorption and blood pressure regulation. In Homo sapiens (Human), this protein is Sodium/hydrogen exchanger 3.